A 1935-amino-acid chain; its full sequence is Myosin-7 (1935 aa).

The 50-residue stretch at 32–81 (DLKKDVFVPDDKEEFVKAKIISREGGKITAETEHGKTVTVKEDQVLQQNP) folds into the Myosin N-terminal SH3-like domain. The region spanning 85–778 (DKIEDMAMLT…LLGLLEEMRD (694 aa)) is the Myosin motor domain. Residue K129 is modified to N6,N6,N6-trimethyllysine. 178–185 (GESGAGKT) contributes to the ATP binding site. T378 is subject to Phosphothreonine. 2 actin-binding regions span residues 655–677 (LNKL…IPNE) and 757–771 (RFGH…GLLG). One can recognise an IQ domain in the interval 781–810 (LSRIITRIQAQSRGVLARMEFKKLLERRDS). Positions 839 to 1935 (LLKSAETEKE…DIGTKGLNEE (1097 aa)) form a coiled coil. S1137 and S1269 each carry phosphoserine. T1282 carries the phosphothreonine modification. A Phosphotyrosine modification is found at Y1308. At T1309 the chain carries Phosphothreonine. Position 1510 is a phosphoserine (S1510). T1513 carries the phosphothreonine modification. The disordered stretch occupies residues 1907–1935 (EERADIAESQVNKLRAKSRDIGTKGLNEE). Basic and acidic residues predominate over residues 1923–1935 (KSRDIGTKGLNEE).

This sequence belongs to the TRAFAC class myosin-kinesin ATPase superfamily. Myosin family. Muscle myosin is a hexameric protein that consists of 2 heavy chain subunits (MHC), 2 alkali light chain subunits (MLC) and 2 regulatory light chain subunits (MLC-2). Interacts with ECPAS. Interacts (via C-terminus) with LRRC39.

It localises to the cytoplasm. Its subcellular location is the myofibril. The protein localises to the sarcomere. Its function is as follows. Myosins are actin-based motor molecules with ATPase activity essential for muscle contraction. Forms regular bipolar thick filaments that, together with actin thin filaments, constitute the fundamental contractile unit of skeletal and cardiac muscle. The sequence is that of Myosin-7 (MYH7) from Equus caballus (Horse).